Here is a 66-residue protein sequence, read N- to C-terminus: UPF0434 protein RPC_0266 (66 aa).

It belongs to the UPF0434 family.

The sequence is that of UPF0434 protein RPC_0266 from Rhodopseudomonas palustris (strain BisB18).